A 192-amino-acid chain; its full sequence is Casparian strip membrane protein 2 (192 aa).

At 1-31 the chain is on the cytoplasmic side; it reads MTKDVVVEHGESSKAPLVAAPAASGVGRAAS. Residues 32–52 form a helical membrane-spanning segment; it reads VADVFLRFLAIVGTIASAISM. Topologically, residues 53–79 are extracellular; it reads GTTNETLPFFTQFIQFEAKYSDLPSFT. An N-linked (GlcNAc...) asparagine glycan is attached at asparagine 56. A helical membrane pass occupies residues 80–100; sequence FFVAANAVVCTYLVLSIPLSI. Topologically, residues 101–112 are cytoplasmic; the sequence is VHIVRPRARYSR. The helical transmembrane segment at 113 to 133 threads the bilayer; that stretch reads LVLVFFDAAMLTLLTAGASAA. Over 134–166 the chain is Extracellular; it reads AAIVYLAHKGNVRANWFAICQQFDSFCERISGS. The chain crosses the membrane as a helical span at residues 167–187; sequence LIGSFAAMVLLIMLIFLSAFA. Topologically, residues 188–192 are cytoplasmic; that stretch reads LARRH.

It belongs to the Casparian strip membrane proteins (CASP) family. In terms of assembly, homodimer and heterodimers.

The protein resides in the cell membrane. In terms of biological role, regulates membrane-cell wall junctions and localized cell wall deposition. Required for establishment of the Casparian strip membrane domain (CSD) and the subsequent formation of Casparian strips, a cell wall modification of the root endodermis that determines an apoplastic barrier between the intraorganismal apoplasm and the extraorganismal apoplasm and prevents lateral diffusion. In Panicum virgatum (Blackwell switchgrass), this protein is Casparian strip membrane protein 2.